The primary structure comprises 290 residues: 3-keto-disaccharide hydrolase (290 aa).

An N-terminal signal peptide occupies residues 1–19 (MKKVFYPLACCLAAGVLVS). Cysteine 20 carries the N-palmitoyl cysteine lipid modification. Cysteine 20 is lipidated: S-diacylglycerol cysteine.

The protein resides in the cell membrane. It catalyses the reaction 3-dehydro-alpha,alpha-trehalose + H2O = 3-dehydro-D-glucose + D-glucose. 3-keto-disaccharide hydrolase that preferentially hydrolyzes 3-keto-trehalose (3-dehydro-alpha,alpha-trehalose). Important for disaccharide utilization in the human gut. Also shows hydrolysis activity with the glucosinolates glucoraphanin or glucobrassicin, but with much lower efficiency. This Bacteroides thetaiotaomicron (strain ATCC 29148 / DSM 2079 / JCM 5827 / CCUG 10774 / NCTC 10582 / VPI-5482 / E50) protein is 3-keto-disaccharide hydrolase.